A 520-amino-acid chain; its full sequence is Serine protease Hip1 (520 aa).

The signal sequence occupies residues 1–30 (MGMRLSRRDKIARMLLIWAALAAVALVLVG). Residue C31 is the site of N-palmitoyl cysteine attachment. A lipid anchor (S-diacylglycerol cysteine) is attached at C31. The AB hydrolase-1 domain occupies 102–497 (GSLVINPGGP…TQHTVVFQGD (396 aa)). S228 acts as the Nucleophile in catalysis. Residue D463 is part of the active site. H490 (proton donor) is an active-site residue.

It belongs to the peptidase S33 family.

It localises to the cell envelope. Its subcellular location is the cell membrane. In terms of biological role, serine protease that promotes pathogenesis by promoting the processing and the extracellular release of the M.bovis heat-shock protein GroEL2. Functionally, key immunomodulatory virulence factor, which promotes survival in host macrophages and modulates host immune responses. This chain is Serine protease Hip1, found in Mycobacterium bovis (strain ATCC BAA-935 / AF2122/97).